Here is a 158-residue protein sequence, read N- to C-terminus: RNA pyrophosphohydrolase (158 aa).

Residues 8–152 (PYRPCAGVML…KRALYRGLIE (145 aa)) enclose the Nudix hydrolase domain. The short motif at 42–63 (GGIDEGEDAEKAAIRELGEETG) is the Nudix box element.

It belongs to the Nudix hydrolase family. RppH subfamily. A divalent metal cation serves as cofactor.

In terms of biological role, accelerates the degradation of transcripts by removing pyrophosphate from the 5'-end of triphosphorylated RNA, leading to a more labile monophosphorylated state that can stimulate subsequent ribonuclease cleavage. This Sphingopyxis alaskensis (strain DSM 13593 / LMG 18877 / RB2256) (Sphingomonas alaskensis) protein is RNA pyrophosphohydrolase.